The primary structure comprises 542 residues: Nibrin homolog (542 aa).

The region spanning 25 to 90 (YKVGRKGCDI…YGTFVKTDLG (66 aa)) is the FHA domain. The 77-residue stretch at 119-195 (IYRLSLIPLV…KTIILTNWVM (77 aa)) folds into the BRCT domain. Residues 409–430 (SRGHMDEKNSSDSVTIRRDRND) form a disordered region. The interval 465 to 500 (VDFKRFRKGNVTCGNSFSSLIPFAKDPYKEYDSWDV) is involved in MRE11-binding.

Belongs to the Nibrin family. Component of the MRN complex composed of two heterodimers RAD50 and MRE11 associated with a single NBS1.

It localises to the nucleus. The protein resides in the chromosome. In terms of biological role, component of the MRN complex, which plays a central role in double-strand break (DSB) repair, DNA recombination, maintenance of telomere integrity and meiosis. The MRN complex is involved in the repair of DNA double-strand breaks (DSBs) via homologous recombination (HR), an error-free mechanism which primarily occurs during S and G2 phases. The complex (1) mediates the end resection of damaged DNA, which generates proper single-stranded DNA, a key initial steps in HR, and is (2) required for the recruitment of other repair factors and efficient activation of ATM and ATR upon DNA damage. The MRN complex possesses single-strand endonuclease activity and double-strand-specific 3'-5' exonuclease activity, which are provided by MRE11, to initiate end resection, which is required for single-strand invasion and recombination. Within the MRN complex, NBS1 acts as a protein-protein adapter, which specifically recognizes and binds phosphorylated proteins, promoting their recruitment to DNA damage sites. Recruits MRE11 and RAD50 components of the MRN complex to DSBs in response to DNA damage. This Arabidopsis thaliana (Mouse-ear cress) protein is Nibrin homolog.